Here is a 31-residue protein sequence, read N- to C-terminus: U14-ctenitoxin-Co1c (31 aa).

Expressed by the venom gland.

The protein localises to the secreted. Functionally, not toxic to mice by intracerebroventricular injection. This is U14-ctenitoxin-Co1c from Ctenus ornatus (Brazilian spider).